Consider the following 35-residue polypeptide: Photosystem II reaction center protein T (35 aa).

Residues 3 to 23 form a helical membrane-spanning segment; it reads ALVYTFLLVSTLGIIFFAIFF.

Belongs to the PsbT family. As to quaternary structure, PSII is composed of 1 copy each of membrane proteins PsbA, PsbB, PsbC, PsbD, PsbE, PsbF, PsbH, PsbI, PsbJ, PsbK, PsbL, PsbM, PsbT, PsbY, PsbZ, Psb30/Ycf12, at least 3 peripheral proteins of the oxygen-evolving complex and a large number of cofactors. It forms dimeric complexes.

Its subcellular location is the plastid. It is found in the chloroplast thylakoid membrane. In terms of biological role, found at the monomer-monomer interface of the photosystem II (PS II) dimer, plays a role in assembly and dimerization of PSII. PSII is a light-driven water plastoquinone oxidoreductase, using light energy to abstract electrons from H(2)O, generating a proton gradient subsequently used for ATP formation. The chain is Photosystem II reaction center protein T from Drimys granadensis.